The chain runs to 74 residues: Protein krueppel (74 aa).

C2H2-type zinc fingers lie at residues 1 to 4 (ERTH), 10 to 32 (FECQ…MRLH), 38 to 60 (YRCE…LRVH), and 66 to 74 (YGCEHCSMK).

This sequence belongs to the krueppel C2H2-type zinc-finger protein family.

The protein resides in the nucleus. In terms of biological role, krueppel is a gap class segmentation protein. In Tribolium castaneum (Red flour beetle), this protein is Protein krueppel (Kr).